Consider the following 1272-residue polypeptide: AF4/FMR2 family member 2 (1272 aa).

Disordered stretches follow at residues 151–190, 204–231, 372–401, 422–497, 557–694, 715–743, and 772–899; these read SNRKSKSEWPRDSHNTSPAQASQTSSQPNKMQTSTQDPPQ, PQIGTVEKSNPSSKEENNPNSGGEDTFK, TLQKWSDPSSRASTKMLEDDLKLSSDEDDL, KAKP…QLDK, IREK…ETLQ, TLSTLTNGNSNNLSTSNEETAFSPPPAMQ, and PGQN…QDKN. Over residues 155 to 164 the composition is skewed to basic and acidic residues; the sequence is SKSEWPRDSH. Residues 165 to 179 show a composition bias toward low complexity; sequence NTSPAQASQTSSQPN. The span at 180–189 shows a compositional bias: polar residues; sequence KMQTSTQDPP. The segment covering 210–227 has biased composition (low complexity); it reads EKSNPSSKEENNPNSGGE. A compositionally biased stretch (polar residues) spans 374-384; that stretch reads QKWSDPSSRAS. Residues 387 to 396 are compositionally biased toward basic and acidic residues; that stretch reads MLEDDLKLSS. The residue at position 395 (serine 395) is a Phosphoserine. The span at 436 to 450 shows a compositional bias: polar residues; it reads TPQSTPATQTNVGSG. At threonine 482 the chain carries Phosphothreonine. Residues 580–590 show a composition bias toward polar residues; it reads STSVDTVSQRT. Over residues 620-633 the composition is skewed to basic and acidic residues; the sequence is PKEKGSVELPDPPR. Over residues 634 to 644 the composition is skewed to basic residues; the sequence is SRNKATAHKPV. The span at 715 to 734 shows a compositional bias: low complexity; it reads TLSTLTNGNSNNLSTSNEET. Basic and acidic residues predominate over residues 815-831; the sequence is PAETAEKIPEKKQRLED. The segment covering 841-850 has biased composition (pro residues); sequence CISPAPPHKP. Polar residues predominate over residues 887–899; it reads VSGNNGHFGQDKN.

Belongs to the AF4 family. As to expression, highly expressed in the hippocampus, the piriform cortex, Purkinje cells and the cingulate gyrus.

The protein resides in the nucleus speckle. RNA-binding protein. Might be involved in alternative splicing regulation through an interaction with G-quartet RNA structure. The sequence is that of AF4/FMR2 family member 2 from Mus musculus (Mouse).